The following is a 355-amino-acid chain: MNFDCIPREDLHGILCHMPKAELHIHIEGSLEPELIFELATRNRIQLPYPTIDELRAAYAFTDLQSFLDIYYAGASVLQKEADFFDMAWAYLKRAKAENVVHAEIFFDPQTHTARGIPFETVINGLDRAIRRGREELGLSASLILCFLRHLSEEDAFAALEDALPFRDKFIGVGLDSSERGNPPEKFTRVFARCRELGLRLVAHAGEEGSAEYISHSLDLLKAERIDHGVHCLDDPKLVARLVQQRIPLTVCPLSNVKLCVFPSLSAHNIGKLLAAGIAATINSDDPAYFGGYLNRNYTATFAALPGLGAKEAYQLARNSFEASFVNENIKEGWIRELDEFFTHYRENEGKWLPL.

Residues His-24, His-26, and His-204 each coordinate Zn(2+). Glu-207 serves as the catalytic Proton donor. Residue Asp-285 participates in Zn(2+) binding. Residue Asp-286 coordinates substrate.

This sequence belongs to the metallo-dependent hydrolases superfamily. Adenosine and AMP deaminases family. Adenine deaminase type 2 subfamily. Zn(2+) serves as cofactor.

The enzyme catalyses adenine + H2O + H(+) = hypoxanthine + NH4(+). Functionally, catalyzes the hydrolytic deamination of adenine to hypoxanthine. Plays an important role in the purine salvage pathway and in nitrogen catabolism. This chain is Adenine deaminase, found in Geotalea uraniireducens (strain Rf4) (Geobacter uraniireducens).